Reading from the N-terminus, the 933-residue chain is Protein inturned (933 aa).

The tract at residues 1 to 54 is disordered; that stretch reads MASLPLCGSVRSPEGLPGDPSSQEDRQDYDPEDPVSGSGSYSPTSTDSNDLEPE. Polar residues predominate over residues 37–48; it reads GSGSYSPTSTDS. The PDZ domain occupies 186 to 264; sequence LVGIIHQTKW…PMQVKLTFEN (79 aa). Ser675 bears the Phosphoserine mark. Residues 703–742 are disordered; the sequence is LKTRKPSPSRSGGPDSGLEGEGVGLSPHTTESQGSHGSEE. Positions 710–719 are enriched in low complexity; it reads PSRSGGPDSG. Residues 729–738 show a composition bias toward polar residues; that stretch reads PHTTESQGSH.

Belongs to the inturned family. Component of the CPLANE (ciliogenesis and planar polarity effectors) complex, composed of INTU, FUZ and WDPCP. Interacts with CPLANE1. Interacts with NPHP4 and DAAM1; INTU is mediating the interaction between NPHP4 and DAAM1.

The protein resides in the cytoplasm. The protein localises to the cell surface. Its subcellular location is the cytoskeleton. It is found in the cilium basal body. It localises to the microtubule organizing center. The protein resides in the centrosome. The protein localises to the centriole. In terms of biological role, plays a key role in ciliogenesis and embryonic development. Regulator of cilia formation by controlling the organization of the apical actin cytoskeleton and the positioning of the basal bodies at the apical cell surface, which in turn is essential for the normal orientation of elongating ciliary microtubules. Plays a key role in definition of cell polarity via its role in ciliogenesis but not via conversion extension. Has an indirect effect on hedgehog signaling. Proposed to function as core component of the CPLANE (ciliogenesis and planar polarity effectors) complex involved in the recruitment of peripheral IFT-A proteins to basal bodies. Required for recruitment of CPLANE2 to the mother centriole. Binds phosphatidylinositol 3-phosphate with highest affinity, followed by phosphatidylinositol 4-phosphate and phosphatidylinositol 5-phosphate. This chain is Protein inturned (INTU), found in Bos taurus (Bovine).